The following is a 493-amino-acid chain: Ketol-acid reductoisomerase (NADP(+)) (493 aa).

Positions 17–208 (LSQCRFMDRS…GGDRAGVLHS (192 aa)) constitute a KARI N-terminal Rossmann domain. Residues 45–48 (CGAQ), Arg-68, Arg-76, Ser-78, and 108–110 (DKQ) contribute to the NADP(+) site. The active site involves His-132. Gly-158 provides a ligand contact to NADP(+). KARI C-terminal knotted domains lie at 209-344 (SFIA…NAPS) and 345-486 (SNEH…MKDM). Mg(2+)-binding residues include Asp-217, Glu-221, Glu-389, and Glu-393. A substrate-binding site is contributed by Ser-414.

Belongs to the ketol-acid reductoisomerase family. It depends on Mg(2+) as a cofactor.

The enzyme catalyses (2R)-2,3-dihydroxy-3-methylbutanoate + NADP(+) = (2S)-2-acetolactate + NADPH + H(+). It carries out the reaction (2R,3R)-2,3-dihydroxy-3-methylpentanoate + NADP(+) = (S)-2-ethyl-2-hydroxy-3-oxobutanoate + NADPH + H(+). It functions in the pathway amino-acid biosynthesis; L-isoleucine biosynthesis; L-isoleucine from 2-oxobutanoate: step 2/4. It participates in amino-acid biosynthesis; L-valine biosynthesis; L-valine from pyruvate: step 2/4. Its function is as follows. Involved in the biosynthesis of branched-chain amino acids (BCAA). Catalyzes an alkyl-migration followed by a ketol-acid reduction of (S)-2-acetolactate (S2AL) to yield (R)-2,3-dihydroxy-isovalerate. In the isomerase reaction, S2AL is rearranged via a Mg-dependent methyl migration to produce 3-hydroxy-3-methyl-2-ketobutyrate (HMKB). In the reductase reaction, this 2-ketoacid undergoes a metal-dependent reduction by NADPH to yield (R)-2,3-dihydroxy-isovalerate. In Shewanella amazonensis (strain ATCC BAA-1098 / SB2B), this protein is Ketol-acid reductoisomerase (NADP(+)).